We begin with the raw amino-acid sequence, 698 residues long: Sucrose non-fermenting protein kinase 1 (698 aa).

The tract at residues 1–48 (MAPRGFEDEELTISLSSSHVRRPQQQQPPPPTQQQHAHQPGSRPADAP) is disordered. Residues 62 to 313 (YKVLRTLGEG…IEDIRADPWF (252 aa)) enclose the Protein kinase domain. Residues 68-76 (LGEGSFGKV) and K91 each bind ATP. Residue D184 is the Proton acceptor of the active site. Positions 320–417 (YLQLPVEEFF…ALLEPEGSSP (98 aa)) are auto-inhibitory domain (AID). Positions 360–397 (VTEKISKTMGYGKNDVEEALQASEPSAIKDAYMIVREN) constitute a UBA domain. Disordered regions lie at residues 410-435 (LEPE…TTTA), 482-525 (TRTD…KKTK), and 564-597 (ESRH…IDPM). Over residues 415–435 (SSPMLSMSSARSATSTTTTTA) the composition is skewed to low complexity. 2 stretches are compositionally biased toward basic and acidic residues: residues 484–493 (TDAEKEETSR) and 564–573 (ESRHAEERAE).

Belongs to the protein kinase superfamily. CAMK Ser/Thr protein kinase family. SNF1 subfamily. As to quaternary structure, component of the AMP-activated protein kinase complex also known as the SNF1 kinase complex (Snf1c), a heterotrimeric complex composed of a catalytic subunit alpha and 2 regulatory subunits beta and gamma.

It is found in the cytoplasm. The protein localises to the nucleus. It carries out the reaction L-seryl-[protein] + ATP = O-phospho-L-seryl-[protein] + ADP + H(+). The enzyme catalyses L-threonyl-[protein] + ATP = O-phospho-L-threonyl-[protein] + ADP + H(+). Functionally, catalytic subunit of the AMP-activated protein kinase complex also known as the SNF1 kinase complex (Snf1c), a central regulator of cellular energy homeostasis, which, in response to a fall in intracellular ATP levels, activates energy-producing pathways and inhibits energy-consuming processes. The complex phosphorylates histone H3 to form H3S10ph, which promotes H3K14ac formation, leading to transcriptional activation through TBP recruitment to the promoters. Activates the expression of the galactose oxidase (GOA) gene and of several cell wall-degrading enzymes (CWDEs) such as pectate lyase, xylanase and glucanase. Plays an important role in sudden death syndrome (SDS) by controlling the colonization of the infected roots. The sequence is that of Sucrose non-fermenting protein kinase 1 from Fusarium virguliforme.